A 545-amino-acid polypeptide reads, in one-letter code: CTP synthase (545 aa).

Positions 1-266 are amidoligase domain; it reads MITNYIFVTG…DQYICDKFNL (266 aa). Ser-14 lines the CTP pocket. Ser-14 provides a ligand contact to UTP. ATP contacts are provided by residues 15–20 and Asp-72; that span reads SLGKGI. Mg(2+) is bound by residues Asp-72 and Glu-140. CTP contacts are provided by residues 147–149, 187–192, and Lys-223; these read DIE and KTKPTQ. UTP contacts are provided by residues 187-192 and Lys-223; that span reads KTKPTQ. 239-241 provides a ligand contact to ATP; that stretch reads KDV. In terms of domain architecture, Glutamine amidotransferase type-1 spans 291–542; sequence SIGMVGKYIE…VKSALAHHQD (252 aa). Gly-352 contributes to the L-glutamine binding site. Cys-379 serves as the catalytic Nucleophile; for glutamine hydrolysis. L-glutamine-binding positions include 380–383, Glu-403, and Arg-470; that span reads LGMQ. Active-site residues include His-515 and Glu-517.

The protein belongs to the CTP synthase family. In terms of assembly, homotetramer.

The enzyme catalyses UTP + L-glutamine + ATP + H2O = CTP + L-glutamate + ADP + phosphate + 2 H(+). It carries out the reaction L-glutamine + H2O = L-glutamate + NH4(+). It catalyses the reaction UTP + NH4(+) + ATP = CTP + ADP + phosphate + 2 H(+). It functions in the pathway pyrimidine metabolism; CTP biosynthesis via de novo pathway; CTP from UDP: step 2/2. Its activity is regulated as follows. Allosterically activated by GTP, when glutamine is the substrate; GTP has no effect on the reaction when ammonia is the substrate. The allosteric effector GTP functions by stabilizing the protein conformation that binds the tetrahedral intermediate(s) formed during glutamine hydrolysis. Inhibited by the product CTP, via allosteric rather than competitive inhibition. In terms of biological role, catalyzes the ATP-dependent amination of UTP to CTP with either L-glutamine or ammonia as the source of nitrogen. Regulates intracellular CTP levels through interactions with the four ribonucleotide triphosphates. This chain is CTP synthase, found in Hamiltonella defensa subsp. Acyrthosiphon pisum (strain 5AT).